A 328-amino-acid chain; its full sequence is Malate dehydrogenase (328 aa).

13–19 (GGKGQIA) is an NAD(+) binding site. Residues Arg-94 and Arg-100 each coordinate substrate. Residues Asn-107, Gln-114, and 131–133 (VGN) contribute to the NAD(+) site. Substrate is bound by residues Asn-133 and Arg-164. His-189 serves as the catalytic Proton acceptor.

Belongs to the LDH/MDH superfamily. MDH type 2 family.

The enzyme catalyses (S)-malate + NAD(+) = oxaloacetate + NADH + H(+). In terms of biological role, catalyzes the reversible oxidation of malate to oxaloacetate. The polypeptide is Malate dehydrogenase (Chlamydia pneumoniae (Chlamydophila pneumoniae)).